The primary structure comprises 88 residues: Small ribosomal subunit protein uS17 (88 aa).

This sequence belongs to the universal ribosomal protein uS17 family. Part of the 30S ribosomal subunit.

Its function is as follows. One of the primary rRNA binding proteins, it binds specifically to the 5'-end of 16S ribosomal RNA. The polypeptide is Small ribosomal subunit protein uS17 (Dechloromonas aromatica (strain RCB)).